The sequence spans 328 residues: Glutathionyl-hydroquinone reductase YqjG (328 aa).

The active-site Nucleophile is the Cys-63. Glutathione is bound by residues Trp-96, 130 to 133, and 148 to 149; these read RVTV and ES. The 125-residue stretch at 172–296 folds into the GST C-terminal domain; that stretch reads PPALQTKIDE…VNFDHIRNHY (125 aa). The active-site Proton donor/acceptor is the Tyr-195. The segment at 203-311 is dimerization; the sequence is QEAYDEAVAK…TINPTGIISI (109 aa).

It belongs to the GST superfamily. Xi-class GSH transferase family. Homodimer.

The enzyme catalyses 2-(glutathione-S-yl)-hydroquinone + glutathione = hydroquinone + glutathione disulfide. Functionally, catalyzes glutathione (GSH)-dependent reduction of glutathionyl-hydroquinones (GS-HQs) to the corresponding hydroquinones. Can use a variety of GS-HQs as substrates, such as GS-p-hydroquinone (GS-HQ), GS-hydroxy-p-hydroquinone (GS-HHQ), GS-methyl-p-hydroquinone (GS-MHQ), GS-menadiol, and GS-trichloro-p-hydroquinone (GS-TriCH). Also displays GSH-dependent disulfide-bond reduction activity toward HED (2-hydroxyethyl disulfide), and is able to catalyze DMA (dimethylarsinate) reduction. Exhibits no GSH transferase activity with 1-chloro-2,4-dinitrobenzene (CDNB). The protein is Glutathionyl-hydroquinone reductase YqjG (yqjG) of Escherichia coli (strain K12).